We begin with the raw amino-acid sequence, 630 residues long: Transferrin-binding protein B (630 aa).

Residues 1–17 (MKSVPLITGGLSFLLSA) form the signal peptide. C18 carries N-palmitoyl cysteine lipidation. C18 carries S-diacylglycerol cysteine lipidation. Disordered regions lie at residues 26–53 (DVDD…KSNL), 280–301 (VTPT…LEGG), and 591–613 (NNPT…SPNA). Residues 32–50 (NPSSSKPRYQDDTSSSRTK) show a composition bias toward polar residues.

This sequence belongs to the TbpB family.

It is found in the cell outer membrane. It localises to the cell surface. Functionally, haemophilus acquires iron by extracting it from serum transferrin (TF) in its human host. Acts as a transferrin receptor and is required for transferrin utilization. The polypeptide is Transferrin-binding protein B (Haemophilus influenzae (strain 86-028NP)).